Consider the following 95-residue polypeptide: Large ribosomal subunit protein uL23 (95 aa).

This sequence belongs to the universal ribosomal protein uL23 family. Part of the 50S ribosomal subunit. Contacts protein L29, and trigger factor when it is bound to the ribosome.

Its function is as follows. One of the early assembly proteins it binds 23S rRNA. One of the proteins that surrounds the polypeptide exit tunnel on the outside of the ribosome. Forms the main docking site for trigger factor binding to the ribosome. In Coxiella burnetii (strain CbuK_Q154) (Coxiella burnetii (strain Q154)), this protein is Large ribosomal subunit protein uL23.